We begin with the raw amino-acid sequence, 427 residues long: Gamma-glutamyl phosphate reductase (427 aa).

This sequence belongs to the gamma-glutamyl phosphate reductase family.

The protein resides in the cytoplasm. The enzyme catalyses L-glutamate 5-semialdehyde + phosphate + NADP(+) = L-glutamyl 5-phosphate + NADPH + H(+). Its pathway is amino-acid biosynthesis; L-proline biosynthesis; L-glutamate 5-semialdehyde from L-glutamate: step 2/2. Its function is as follows. Catalyzes the NADPH-dependent reduction of L-glutamate 5-phosphate into L-glutamate 5-semialdehyde and phosphate. The product spontaneously undergoes cyclization to form 1-pyrroline-5-carboxylate. This Anaeromyxobacter sp. (strain K) protein is Gamma-glutamyl phosphate reductase.